Reading from the N-terminus, the 273-residue chain is MEANAPKRKEARKSLRIKVISMGNAEVGKSCIIKRYCEKRFVPKYLATIGIDYGVTKVQVRDREIKVNIFDMAGHPFFYEVRNEFYKDTQGVILVYDVGQKESFDALDAWLAEMKQELGPHGNMDNIVFVVCANKIDCTKHRSVDESEGRLWAESRGFLYFETSAQTGEGINEMFQTFYSAIIDLCDNGGKRPPSSMGVGFTKEQADAIRRIRNSKDSWDMLGVKPGATRDEVNKAYRKLAVLLHPDKCVAPGSEDAFKAVVNARTALLKNIK.

Residues 23 to 30 (GNAEVGKS), 71 to 75 (DMAGH), and 134 to 137 (NKID) each bind GTP. Positions 217–273 (DSWDMLGVKPGATRDEVNKAYRKLAVLLHPDKCVAPGSEDAFKAVVNARTALLKNIK) constitute a J domain.

The protein belongs to the small GTPase superfamily. Rab family.

The protein resides in the nucleus. Functionally, GTPase possibly involved in regulation of the MEK/ERK pathway. This Gallus gallus (Chicken) protein is DnaJ homolog subfamily C member 27 (DNAJC27).